Reading from the N-terminus, the 241-residue chain is Large ribosomal subunit protein uL3 (241 aa).

2 disordered regions span residues 139-164 (VSHRSIGSTGGRQDPGKTFKNKKMPG) and 215-241 (DAPKPGKFRLANGGEEAAAPAAEQEGV). Gln-151 bears the N5-methylglutamine mark. Residues 225–241 (ANGGEEAAAPAAEQEGV) show a composition bias toward low complexity.

Belongs to the universal ribosomal protein uL3 family. In terms of assembly, part of the 50S ribosomal subunit. Forms a cluster with proteins L14 and L19. In terms of processing, methylated by PrmB.

Functionally, one of the primary rRNA binding proteins, it binds directly near the 3'-end of the 23S rRNA, where it nucleates assembly of the 50S subunit. In Rhodopseudomonas palustris (strain HaA2), this protein is Large ribosomal subunit protein uL3.